A 490-amino-acid chain; its full sequence is Homoserine O-acetyltransferase (490 aa).

The AB hydrolase-1 domain maps to 47–353 (NAILVCHALT…SQFGHDAFLI (307 aa)). S152 functions as the Nucleophile in the catalytic mechanism. R221 is a substrate binding site. Residues D315 and H348 contribute to the active site. D349 is a substrate binding site. CBS domains lie at 375–432 (MNTQ…YTSL) and 436–490 (MSSQ…GRGP).

This sequence belongs to the AB hydrolase superfamily. MetX family. As to quaternary structure, homodimer.

The protein localises to the cytoplasm. It carries out the reaction L-homoserine + acetyl-CoA = O-acetyl-L-homoserine + CoA. It functions in the pathway amino-acid biosynthesis; L-methionine biosynthesis via de novo pathway; O-acetyl-L-homoserine from L-homoserine: step 1/1. In terms of biological role, transfers an acetyl group from acetyl-CoA to L-homoserine, forming acetyl-L-homoserine. The protein is Homoserine O-acetyltransferase of Methanosphaerula palustris (strain ATCC BAA-1556 / DSM 19958 / E1-9c).